A 405-amino-acid polypeptide reads, in one-letter code: Squamosa promoter-binding-like protein 6 (405 aa).

The SBP-type zinc finger occupies 121-198 (NPLCQVYGCS…AGHNERRRKP (78 aa)). The Zn(2+) site is built by Cys-124, Cys-129, Cys-146, His-149, Cys-165, Cys-168, His-172, and Cys-184. A Bipartite nuclear localization signal motif is present at residues 181–197 (KRSCRRRLAGHNERRRK).

The cofactor is Zn(2+).

It localises to the nucleus. Functionally, trans-acting factor that binds specifically to the consensus nucleotide sequence 5'-TNCGTACAA-3'. This is Squamosa promoter-binding-like protein 6 (SPL6) from Arabidopsis thaliana (Mouse-ear cress).